The following is a 306-amino-acid chain: MPNPLYRQHIISISDLSREQLECLLQTALKLKAHPRGDLLEGKLIGSCFFEPSTRTRLSFETAVQRLGGKVIGFSDGANTSAKKGETLADTARIISGYTDAIIQRHPKDGAARVAAEFSRVPVINAGDGTNQHPSQTLLDLVTIYETQGRLDKLKIAMAGDLKYGRTVHSLCQALKRWNCEFAFVSPPSLAMPDYITEELDEAGCRYRILGSLEEAAEWADILYMTRVQRERFDEQEFAKIQGKFNLEASMLARAKPNLRVLHPLPRVDEIHPDVDATPHAYYFEQATNGVYARMAILSLVLNEEV.

The carbamoyl phosphate site is built by R55 and T56. K84 provides a ligand contact to L-aspartate. Positions 105, 133, and 136 each coordinate carbamoyl phosphate. The L-aspartate site is built by R166 and R227. Carbamoyl phosphate is bound by residues L265 and P266.

Belongs to the aspartate/ornithine carbamoyltransferase superfamily. ATCase family. Heterododecamer (2C3:3R2) of six catalytic PyrB chains organized as two trimers (C3), and six regulatory PyrI chains organized as three dimers (R2).

It catalyses the reaction carbamoyl phosphate + L-aspartate = N-carbamoyl-L-aspartate + phosphate + H(+). It participates in pyrimidine metabolism; UMP biosynthesis via de novo pathway; (S)-dihydroorotate from bicarbonate: step 2/3. Functionally, catalyzes the condensation of carbamoyl phosphate and aspartate to form carbamoyl aspartate and inorganic phosphate, the committed step in the de novo pyrimidine nucleotide biosynthesis pathway. The protein is Aspartate carbamoyltransferase catalytic subunit of Neisseria meningitidis serogroup A / serotype 4A (strain DSM 15465 / Z2491).